The primary structure comprises 181 residues: MAIGLKEKYKTTVTQSLKDEFQYKNVHEVPRFTKITINRGLGEASQNAKALESSIQELTLITGQKPIVTKAKKSIAGFKIREEVPIGIVVHLRKDKMYSFLEKLINLTLPRIRDFRGISPRSFDGKGNYNLGLREQLIFPEIDYDNIDQIRGLDISIVTTAKTDQEGLALLKKLGMPFRES.

The protein belongs to the universal ribosomal protein uL5 family. Part of the 50S ribosomal subunit; contacts the 5S rRNA.

It localises to the plastid. The protein resides in the chloroplast. Functionally, binds 5S rRNA, forms part of the central protuberance of the 50S subunit. The protein is Large ribosomal subunit protein uL5c (rpl5) of Pyropia yezoensis (Susabi-nori).